The primary structure comprises 87 residues: Translation initiation factor IF-1 2 (87 aa).

The S1-like domain occupies 1–72; it reads MAKEEVIEME…TKGRINFRHK (72 aa).

The protein belongs to the IF-1 family. In terms of assembly, component of the 30S ribosomal translation pre-initiation complex which assembles on the 30S ribosome in the order IF-2 and IF-3, IF-1 and N-formylmethionyl-tRNA(fMet); mRNA recruitment can occur at any time during PIC assembly.

The protein localises to the cytoplasm. Functionally, one of the essential components for the initiation of protein synthesis. Stabilizes the binding of IF-2 and IF-3 on the 30S subunit to which N-formylmethionyl-tRNA(fMet) subsequently binds. Helps modulate mRNA selection, yielding the 30S pre-initiation complex (PIC). Upon addition of the 50S ribosomal subunit IF-1, IF-2 and IF-3 are released leaving the mature 70S translation initiation complex. This is Translation initiation factor IF-1 2 from Thiobacillus denitrificans (strain ATCC 25259 / T1).